A 423-amino-acid polypeptide reads, in one-letter code: L-cysteine:1D-myo-inositol 2-amino-2-deoxy-alpha-D-glucopyranoside ligase (423 aa).

Cysteine 45 serves as a coordination point for Zn(2+). Residues 45 to 48 (CGIT), threonine 60, and 83 to 85 (NVT) each bind L-cysteinyl-5'-AMP. A 'HIGH' region motif is present at residues 47–57 (ITPYDATHIGH). Positions 197–202 (DRGGDP) match the 'ERGGDP' region motif. L-cysteinyl-5'-AMP is bound at residue tryptophan 238. Cysteine 242 is a Zn(2+) binding site. 260-262 (GSD) is an L-cysteinyl-5'-AMP binding site. Histidine 267 is a binding site for Zn(2+). Residue isoleucine 294 participates in L-cysteinyl-5'-AMP binding. Residues 300–304 (KMSKS) carry the 'KMSKS' region motif.

Belongs to the class-I aminoacyl-tRNA synthetase family. MshC subfamily. In terms of assembly, monomer. Zn(2+) serves as cofactor.

It catalyses the reaction 1D-myo-inositol 2-amino-2-deoxy-alpha-D-glucopyranoside + L-cysteine + ATP = 1D-myo-inositol 2-(L-cysteinylamino)-2-deoxy-alpha-D-glucopyranoside + AMP + diphosphate + H(+). Its function is as follows. Catalyzes the ATP-dependent condensation of GlcN-Ins and L-cysteine to form L-Cys-GlcN-Ins. The sequence is that of L-cysteine:1D-myo-inositol 2-amino-2-deoxy-alpha-D-glucopyranoside ligase from Jonesia denitrificans (strain ATCC 14870 / DSM 20603 / BCRC 15368 / CIP 55.134 / JCM 11481 / NBRC 15587 / NCTC 10816 / Prevot 55134) (Listeria denitrificans).